We begin with the raw amino-acid sequence, 351 residues long: Glycerol-3-phosphate dehydrogenase [NAD(P)+] (351 aa).

NADPH contacts are provided by S18, W19, R38, and K122. Positions 122, 153, and 155 each coordinate sn-glycerol 3-phosphate. A157 contributes to the NADPH binding site. Sn-glycerol 3-phosphate is bound by residues K208, D261, S271, R272, and N273. K208 acts as the Proton acceptor in catalysis. R272 is a binding site for NADPH. An NADPH-binding site is contributed by E297.

The protein belongs to the NAD-dependent glycerol-3-phosphate dehydrogenase family.

It localises to the cytoplasm. The enzyme catalyses sn-glycerol 3-phosphate + NAD(+) = dihydroxyacetone phosphate + NADH + H(+). It catalyses the reaction sn-glycerol 3-phosphate + NADP(+) = dihydroxyacetone phosphate + NADPH + H(+). It functions in the pathway membrane lipid metabolism; glycerophospholipid metabolism. In terms of biological role, catalyzes the reduction of the glycolytic intermediate dihydroxyacetone phosphate (DHAP) to sn-glycerol 3-phosphate (G3P), the key precursor for phospholipid synthesis. In Bordetella pertussis (strain Tohama I / ATCC BAA-589 / NCTC 13251), this protein is Glycerol-3-phosphate dehydrogenase [NAD(P)+].